We begin with the raw amino-acid sequence, 255 residues long: Sulfur carrier protein FdhD (255 aa).

The active-site Cysteine persulfide intermediate is C103.

Belongs to the FdhD family.

It localises to the cytoplasm. Functionally, required for formate dehydrogenase (FDH) activity. Acts as a sulfur carrier protein that transfers sulfur from IscS to the molybdenum cofactor prior to its insertion into FDH. The polypeptide is Sulfur carrier protein FdhD (Sulfurisphaera tokodaii (strain DSM 16993 / JCM 10545 / NBRC 100140 / 7) (Sulfolobus tokodaii)).